Consider the following 241-residue polypeptide: LexA repressor (241 aa).

The segment at residues 41–61 is a DNA-binding region (H-T-H motif); it reads FREIGNAAGLKSPSSVKHQLQ. Residues Ser165 and Lys202 each act as for autocatalytic cleavage activity in the active site.

The protein belongs to the peptidase S24 family. As to quaternary structure, homodimer.

The catalysed reaction is Hydrolysis of Ala-|-Gly bond in repressor LexA.. Represses a number of genes involved in the response to DNA damage (SOS response), including recA and lexA. In the presence of single-stranded DNA, RecA interacts with LexA causing an autocatalytic cleavage which disrupts the DNA-binding part of LexA, leading to derepression of the SOS regulon and eventually DNA repair. This is LexA repressor from Bifidobacterium longum (strain DJO10A).